The primary structure comprises 334 residues: Proline-serine-threonine phosphatase-interacting protein 2 (334 aa).

The F-BAR domain occupies 4-264 (SLFKGNFWSA…SLEMCSIQRD (261 aa)). Residues 66 to 166 (GQSEINTLKR…AVSRSANLVN (101 aa)) are a coiled coil. Positions 295 to 322 (VPAGKATGPNLARRGPLPIPKSSPDDPN) are disordered. 2 positions are modified to phosphotyrosine: Y323 and Y329.

Post-translationally, phosphorylated on tyrosine.

It localises to the cytoplasm. The protein localises to the membrane. Functionally, binds to F-actin. May be involved in regulation of the actin cytoskeleton. This Homo sapiens (Human) protein is Proline-serine-threonine phosphatase-interacting protein 2 (PSTPIP2).